The chain runs to 865 residues: FO synthase (865 aa).

A disordered region spans residues 1-21 (MIEGVTELATPNVPPAPPSPS). 2 Radical SAM core domains span residues 76 to 320 (ITYS…LGPD) and 544 to 785 (VTYV…DNIQ). The interval 77–409 (TYSRNVFIPL…PRIGAHVAAL (333 aa)) is cofG-like. The [4Fe-4S] cluster site is built by cysteine 90, cysteine 94, cysteine 97, cysteine 558, cysteine 562, and cysteine 565. A cofH-like region spans residues 521 to 854 (DGAELDAVAA…RERTTVYGRV (334 aa)).

This sequence in the N-terminal section; belongs to the radical SAM superfamily. CofG family. It in the C-terminal section; belongs to the radical SAM superfamily. CofH family. [4Fe-4S] cluster is required as a cofactor.

It catalyses the reaction 5-amino-6-(D-ribitylamino)uracil + L-tyrosine + S-adenosyl-L-methionine = 5-amino-5-(4-hydroxybenzyl)-6-(D-ribitylimino)-5,6-dihydrouracil + 2-iminoacetate + 5'-deoxyadenosine + L-methionine + H(+). The enzyme catalyses 5-amino-5-(4-hydroxybenzyl)-6-(D-ribitylimino)-5,6-dihydrouracil + S-adenosyl-L-methionine = 7,8-didemethyl-8-hydroxy-5-deazariboflavin + 5'-deoxyadenosine + L-methionine + NH4(+) + H(+). Its pathway is cofactor biosynthesis; coenzyme F0 biosynthesis. Its function is as follows. Catalyzes the radical-mediated synthesis of 7,8-didemethyl-8-hydroxy-5-deazariboflavin (FO) from 5-amino-6-(D-ribitylamino)uracil and L-tyrosine. This is FO synthase (fbiC) from Nocardia farcinica (strain IFM 10152).